The sequence spans 437 residues: Zinc finger CCCH domain-containing protein 40 (437 aa).

The C3H1-type zinc finger occupies 6–33 (MYKTKLCILFNKTGDCSRPNCTFAHGNA). Positions 35 to 107 (LRRPGESSFT…MPFENRRDKD (73 aa)) are disordered. A compositionally biased stretch (basic and acidic residues) spans 48 to 85 (HNMDSDLRDRRHNMDSDLRDRLGRQFSPERRPSLDRSG). Residues 145 to 244 (NNVLEEQLKD…LGNQLSTYLA (100 aa)) are a coiled coil. Residue Ser-259 is modified to Phosphoserine. Disordered regions lie at residues 266 to 360 (RNLR…RRRF) and 380 to 437 (EFDD…DDSV). Residues 307–319 (RGEEEKVENEKKR) are compositionally biased toward basic and acidic residues. Acidic residues-rich tracts occupy residues 333 to 343 (EEESGAWNDED) and 383 to 392 (DVAESEEENP). Over residues 426 to 437 (MEQKKAYDDDSV) the composition is skewed to basic and acidic residues.

The polypeptide is Zinc finger CCCH domain-containing protein 40 (Arabidopsis thaliana (Mouse-ear cress)).